Reading from the N-terminus, the 228-residue chain is Triosephosphate isomerase (228 aa).

Residue Asn11 to Lys13 coordinates substrate. His95 serves as the catalytic Electrophile. Glu143 serves as the catalytic Proton acceptor. Substrate-binding positions include Ile148, Gly183, and Ala204–Ser205.

The protein belongs to the triosephosphate isomerase family. As to quaternary structure, homotetramer; dimer of dimers.

It is found in the cytoplasm. The enzyme catalyses D-glyceraldehyde 3-phosphate = dihydroxyacetone phosphate. The protein operates within carbohydrate biosynthesis; gluconeogenesis. Its pathway is carbohydrate degradation; glycolysis; D-glyceraldehyde 3-phosphate from glycerone phosphate: step 1/1. Involved in the gluconeogenesis. Catalyzes stereospecifically the conversion of dihydroxyacetone phosphate (DHAP) to D-glyceraldehyde-3-phosphate (G3P). This chain is Triosephosphate isomerase, found in Pyrococcus horikoshii (strain ATCC 700860 / DSM 12428 / JCM 9974 / NBRC 100139 / OT-3).